We begin with the raw amino-acid sequence, 144 residues long: Actin-associated protein FAM107A (144 aa).

Positions 70–90 (VLEHRRRNQLIKKKEEELEAK) form a coiled coil. Residues 74-84 (RRRNQLIKKKE) carry the Nuclear localization signal motif. The interval 104–123 (QQRLNQLENPPQRDEDHAPE) is disordered. The segment covering 114 to 123 (PQRDEDHAPE) has biased composition (basic and acidic residues).

As to quaternary structure, interacts with ACTB. Interacts with F-actin. Interacts with PRDX1. Interacts with COMMD1; this interaction stabilizes COMMD1 in the nucleus. Interacts with MAP1A. In terms of tissue distribution, expressed in septum, the neocortex, the CA3 region of the hippocampus and the cerebellum (at protein level).

It is found in the nucleus. It localises to the cytoplasm. Its subcellular location is the cytoskeleton. The protein localises to the stress fiber. The protein resides in the cell junction. It is found in the focal adhesion. It localises to the cell projection. Its subcellular location is the ruffle membrane. The protein localises to the synapse. Functionally, stress-inducible actin-binding protein that plays a role in synaptic and cognitive functions by modulating actin filamentous (F-actin) dynamics. Mediates polymerization of globular actin to F-actin. Also binds to, stabilizes and bundles F-actin. Involved in synaptic function by regulating neurite outgrowth in an actin-dependent manner and for the acquisition of hippocampus-dependent cognitive function, such as learning and long-term memory. Plays a role in the actin and microtubule cytoskeleton organization; negatively regulates focal adhesion (FA) assembly promoting malignant glial cell migration in an actin-, microtubule- and MAP1A-dependent manner. Also involved in neuroblastoma G1/S phase cell cycle progression and cell proliferation inhibition by stimulating ubiquitination of NF-kappa-B subunit RELA and NF-kappa-B degradation in a COMMD1- and actin-dependent manner. May play a role in tumor development. This is Actin-associated protein FAM107A from Mus musculus (Mouse).